A 206-amino-acid polypeptide reads, in one-letter code: Large ribosomal subunit protein uL4 (206 aa).

The segment at 44-77 (RQGTRAQKDRQTVKHSTKKPWRQKGTGRARAGMT) is disordered. Basic residues predominate over residues 56–70 (VKHSTKKPWRQKGTG).

Belongs to the universal ribosomal protein uL4 family. In terms of assembly, part of the 50S ribosomal subunit.

In terms of biological role, one of the primary rRNA binding proteins, this protein initially binds near the 5'-end of the 23S rRNA. It is important during the early stages of 50S assembly. It makes multiple contacts with different domains of the 23S rRNA in the assembled 50S subunit and ribosome. Forms part of the polypeptide exit tunnel. The sequence is that of Large ribosomal subunit protein uL4 from Methylibium petroleiphilum (strain ATCC BAA-1232 / LMG 22953 / PM1).